The following is a 305-amino-acid chain: MARRNGNNNFLNIMRSMLSFLDTRIESSDIDASNTPGGVFMNRLRSRLVDLISGRIGDGDDGREDDETRAPPPGRDLRGRGRKVRGSARQEVPSVEERNLVDRCNRMMNETEERPTRERRRTRAVSRGSERNGETERPRSEGVEDPVTLTTSIVVTGDGLGNTQAPSQSAEAQDETGPRSSRTVGSRGFRVVFPRIPSQELRFLFLTPQSEGSRGNIIYEIQINFDVFEASSEAPTTATKESLKKSSIVRAVEADKGCECAICMSNFIKNQRLRVLPCDHRFHVGCVDKWLLGHSNKCPVCRTAI.

The interval 53–185 (SGRIGDGDDG…TGPRSSRTVG (133 aa)) is disordered. 2 stretches are compositionally biased toward basic and acidic residues: residues 95–116 (VEER…ERPT) and 128–142 (GSER…RSEG). Polar residues predominate over residues 161 to 171 (GNTQAPSQSAE). The segment at 260-302 (CAICMSNFIKNQRLRVLPCDHRFHVGCVDKWLLGHSNKCPVCR) adopts an RING-type; atypical zinc-finger fold.

This is an uncharacterized protein from Encephalitozoon cuniculi (strain GB-M1) (Microsporidian parasite).